The sequence spans 294 residues: Acetyl-coenzyme A carboxylase carboxyl transferase subunit beta (294 aa).

The CoA carboxyltransferase N-terminal domain maps to 30–294; the sequence is IMTKCPECKK…PEVGGEADGE (265 aa). Residues Cys-34, Cys-37, Cys-53, and Cys-56 each coordinate Zn(2+). The segment at 34–56 adopts a C4-type zinc-finger fold; sequence CPECKKIMYTKELQKNLMVCNYC.

It belongs to the AccD/PCCB family. Acetyl-CoA carboxylase is a heterohexamer composed of biotin carboxyl carrier protein (AccB), biotin carboxylase (AccC) and two subunits each of ACCase subunit alpha (AccA) and ACCase subunit beta (AccD). The cofactor is Zn(2+).

It is found in the cytoplasm. It carries out the reaction N(6)-carboxybiotinyl-L-lysyl-[protein] + acetyl-CoA = N(6)-biotinyl-L-lysyl-[protein] + malonyl-CoA. The protein operates within lipid metabolism; malonyl-CoA biosynthesis; malonyl-CoA from acetyl-CoA: step 1/1. Functionally, component of the acetyl coenzyme A carboxylase (ACC) complex. Biotin carboxylase (BC) catalyzes the carboxylation of biotin on its carrier protein (BCCP) and then the CO(2) group is transferred by the transcarboxylase to acetyl-CoA to form malonyl-CoA. The protein is Acetyl-coenzyme A carboxylase carboxyl transferase subunit beta of Listeria monocytogenes serotype 4b (strain F2365).